A 157-amino-acid polypeptide reads, in one-letter code: Ubiquitin-like protein 4A (157 aa).

The region spanning Met-1–Lys-76 is the Ubiquitin-like domain. Lys-48 is covalently cross-linked (Glycyl lysine isopeptide (Lys-Gly) (interchain with G-Cter in ubiquitin)). At Ser-90 the chain carries Phosphoserine. A required and sufficient for interaction with BAG6 region spans residues Trp-96–Leu-138.

Component of the BAG6/BAT3 complex, at least composed of BAG6, UBL4A and GET4/TRC35. Interacts with BAG6; the interaction is direct and required for UBL4A protein stability. Interacts with USP13; may be indirect via BAG6. Polyubiquitinated. Ubiquitination by AMFR and deubiquitination by USP13 may regulate the interaction between the BAG6/BAT3 complex and SGTA and therefore may regulate client proteins fate.

It localises to the cytoplasm. It is found in the cytosol. The protein localises to the nucleus. As part of a cytosolic protein quality control complex, the BAG6/BAT3 complex, maintains misfolded and hydrophobic patches-containing proteins in a soluble state and participates in their proper delivery to the endoplasmic reticulum or alternatively can promote their sorting to the proteasome where they undergo degradation. The BAG6/BAT3 complex is involved in the post-translational delivery of tail-anchored/type II transmembrane proteins to the endoplasmic reticulum membrane. Recruited to ribosomes, it interacts with the transmembrane region of newly synthesized tail-anchored proteins and together with SGTA and ASNA1 mediates their delivery to the endoplasmic reticulum. Client proteins that cannot be properly delivered to the endoplasmic reticulum are ubiquitinated and sorted to the proteasome. Similarly, the BAG6/BAT3 complex also functions as a sorting platform for proteins of the secretory pathway that are mislocalized to the cytosol either delivering them to the proteasome for degradation or to the endoplasmic reticulum. The BAG6/BAT3 complex also plays a role in the endoplasmic reticulum-associated degradation (ERAD), a quality control mechanism that eliminates unwanted proteins of the endoplasmic reticulum through their retrotranslocation to the cytosol and their targeting to the proteasome. It maintains these retrotranslocated proteins in an unfolded yet soluble state condition in the cytosol to ensure their proper delivery to the proteasome. The sequence is that of Ubiquitin-like protein 4A from Mus musculus (Mouse).